The chain runs to 113 residues: Small ribosomal subunit protein bS6 (113 aa).

The protein belongs to the bacterial ribosomal protein bS6 family.

Binds together with bS18 to 16S ribosomal RNA. This is Small ribosomal subunit protein bS6 from Buchnera aphidicola subsp. Schizaphis graminum (strain Sg).